A 316-amino-acid chain; its full sequence is Acetaldehyde dehydrogenase (316 aa).

13-16 (SGNI) is an NAD(+) binding site. Cys131 acts as the Acyl-thioester intermediate in catalysis. NAD(+) contacts are provided by residues 162 to 170 (SAGPGTRAN) and Asn290.

The protein belongs to the acetaldehyde dehydrogenase family.

The catalysed reaction is acetaldehyde + NAD(+) + CoA = acetyl-CoA + NADH + H(+). In terms of biological role, catalyzes the conversion of acetaldehyde to acetyl-CoA, using NAD(+) and coenzyme A. Is the final enzyme in the meta-cleavage pathway for the degradation of 2-aminophenol. This chain is Acetaldehyde dehydrogenase (amnH), found in Pseudomonas sp.